A 171-amino-acid polypeptide reads, in one-letter code: uncharacterized protein (171 aa).

To A.aeolicus aq_616.

This is an uncharacterized protein from Aquifex aeolicus (strain VF5).